Here is a 64-residue protein sequence, read N- to C-terminus: Large ribosomal subunit protein bL33c (64 aa).

The protein belongs to the bacterial ribosomal protein bL33 family.

Its subcellular location is the plastid. It is found in the chloroplast. This chain is Large ribosomal subunit protein bL33c (rpl33), found in Cyanidium caldarium (Red alga).